The primary structure comprises 416 residues: Adenylosuccinate synthetase (416 aa).

Residues 13–19 (GDEGKGK) and 41–43 (GHT) contribute to the GTP site. Asp-14 acts as the Proton acceptor in catalysis. 2 residues coordinate Mg(2+): Asp-14 and Gly-41. IMP contacts are provided by residues 14-17 (DEGK), 39-42 (NAGH), Thr-126, Arg-140, Gln-220, Thr-235, and Arg-299. Residue His-42 is the Proton donor of the active site. Substrate is bound at residue 295 to 301 (VSTGRKR). Residues Arg-301, 327 to 329 (KLD), and 405 to 407 (STS) contribute to the GTP site.

Belongs to the adenylosuccinate synthetase family. In terms of assembly, homodimer. The cofactor is Mg(2+).

It localises to the cytoplasm. The enzyme catalyses IMP + L-aspartate + GTP = N(6)-(1,2-dicarboxyethyl)-AMP + GDP + phosphate + 2 H(+). Its pathway is purine metabolism; AMP biosynthesis via de novo pathway; AMP from IMP: step 1/2. Its function is as follows. Plays an important role in the de novo pathway of purine nucleotide biosynthesis. Catalyzes the first committed step in the biosynthesis of AMP from IMP. This Campylobacter jejuni subsp. jejuni serotype O:6 (strain 81116 / NCTC 11828) protein is Adenylosuccinate synthetase.